The sequence spans 311 residues: NAD kinase (311 aa).

Aspartate 67 functions as the Proton acceptor in the catalytic mechanism. Residues 67–68 (DG), arginine 72, 140–141 (ND), arginine 151, aspartate 170, 181–186 (TAYSLS), and glutamine 240 each bind NAD(+). Basic and acidic residues predominate over residues 278-287 (LKEGGSRQDD). Residues 278–311 (LKEGGSRQDDENPAATVNPETDSKYPHSHPGSTG) form a disordered region.

It belongs to the NAD kinase family. A divalent metal cation is required as a cofactor.

The protein resides in the cytoplasm. The catalysed reaction is NAD(+) + ATP = ADP + NADP(+) + H(+). Its function is as follows. Involved in the regulation of the intracellular balance of NAD and NADP, and is a key enzyme in the biosynthesis of NADP. Catalyzes specifically the phosphorylation on 2'-hydroxyl of the adenosine moiety of NAD to yield NADP. The chain is NAD kinase from Moorella thermoacetica (strain ATCC 39073 / JCM 9320).